The primary structure comprises 355 residues: Uroporphyrinogen decarboxylase (355 aa).

Substrate is bound by residues 27–31, Asp77, Tyr154, Thr209, and His327; that span reads RQAGR.

Belongs to the uroporphyrinogen decarboxylase family. As to quaternary structure, homodimer.

It is found in the cytoplasm. It carries out the reaction uroporphyrinogen III + 4 H(+) = coproporphyrinogen III + 4 CO2. The protein operates within porphyrin-containing compound metabolism; protoporphyrin-IX biosynthesis; coproporphyrinogen-III from 5-aminolevulinate: step 4/4. Its function is as follows. Catalyzes the decarboxylation of four acetate groups of uroporphyrinogen-III to yield coproporphyrinogen-III. This chain is Uroporphyrinogen decarboxylase, found in Yersinia enterocolitica serotype O:8 / biotype 1B (strain NCTC 13174 / 8081).